A 264-amino-acid polypeptide reads, in one-letter code: 3-methyl-2-oxobutanoate hydroxymethyltransferase (264 aa).

Positions 45 and 84 each coordinate Mg(2+). 3-methyl-2-oxobutanoate contacts are provided by residues 45–46 (DS), D84, and K112. A Mg(2+)-binding site is contributed by E114. The active-site Proton acceptor is the E181.

The protein belongs to the PanB family. As to quaternary structure, homodecamer; pentamer of dimers. The cofactor is Mg(2+).

It localises to the cytoplasm. It carries out the reaction 3-methyl-2-oxobutanoate + (6R)-5,10-methylene-5,6,7,8-tetrahydrofolate + H2O = 2-dehydropantoate + (6S)-5,6,7,8-tetrahydrofolate. It functions in the pathway cofactor biosynthesis; (R)-pantothenate biosynthesis; (R)-pantoate from 3-methyl-2-oxobutanoate: step 1/2. Functionally, catalyzes the reversible reaction in which hydroxymethyl group from 5,10-methylenetetrahydrofolate is transferred onto alpha-ketoisovalerate to form ketopantoate. The chain is 3-methyl-2-oxobutanoate hydroxymethyltransferase from Shigella sonnei (strain Ss046).